We begin with the raw amino-acid sequence, 172 residues long: Small ribosomal subunit protein uS5 (172 aa).

Positions L15 to I78 constitute an S5 DRBM domain.

It belongs to the universal ribosomal protein uS5 family. Part of the 30S ribosomal subunit. Contacts proteins S4 and S8.

With S4 and S12 plays an important role in translational accuracy. In terms of biological role, located at the back of the 30S subunit body where it stabilizes the conformation of the head with respect to the body. The polypeptide is Small ribosomal subunit protein uS5 (Dehalococcoides mccartyi (strain CBDB1)).